The sequence spans 177 residues: Thymidine kinase (177 aa).

11–18 contacts ATP; the sequence is GPMLSGKS. E83 acts as the Proton acceptor in catalysis. Position 113 (F113) interacts with substrate. Zn(2+) contacts are provided by C138 and C141. A substrate-binding site is contributed by 157 to 161; the sequence is IEIIG. Residues C170 and C173 each contribute to the Zn(2+) site.

This sequence belongs to the thymidine kinase family. Homotetramer. Two molecules of substrate bind to each enzyme tetramer.

The enzyme catalyses thymidine + ATP = dTMP + ADP + H(+). Functionally, phosphorylates thymidine and thymidine analogs, such as azidothymidine (AZT). Part of the salvage pathway for pyrimidine deoxyribonucleotide synthesis. In Monkeypox virus (strain Zaire-96-I-16) (MPX), this protein is Thymidine kinase (OPG101).